Reading from the N-terminus, the 378-residue chain is Cytochrome P450 monooxygenase pytD (378 aa).

Residue Cys321 participates in heme binding.

This sequence belongs to the cytochrome P450 family. Heme serves as cofactor.

Its pathway is secondary metabolite biosynthesis. Its function is as follows. Cytochrome P450 monooxygenase pytD; part of the gene cluster that mediates the biosynthesis of pyranterreones, a family of antioxidative compounds. The first step of pyranonigrins biosynthesis is performed by the hybrid PKS-NRPS synthetase pytA that condenses 4 malonyl-CoA units ato the acetyl starter unit by the modular PKS of pytA. The acyl chain is then connected to an L-serine through the amide bond by the modular NRPS of pytA. A tetramic acid is formed and released from the PKS-NRPS pytA to give pyranterreone 5 with the help of the thioesterase pytI. Pyranterreone 5 could be methylated by pytC to afford pyranterreone 6. Both pyranterreones 5 and 6 are subsequently oxidized by the FAD-linked oxidoreductase pytB and the cytochrome P450 monooxygenase pytD to form the fused gamma-pyrone core, resulting in pyranterreones 7 and 11, respectively. The hydroxy group at C-8 of pyranterreones 7 and 11 are dehydrated by the aspartyl protease pytH to form a delta-7 double bond to give pyranterreones 3 and 1, 2 accordingly. The exo-methylene of pyranterreone 3 could be reduced into a pendant methyl by reductase pytE to provide pyranterreone 4, also known as cordylactam. Pyranterreone 4 can be reconverted to pyranterreone 3 through pytB-catalyzed dehydrogenation or further oxidized to pyranterreones 9 and 10. The polypeptide is Cytochrome P450 monooxygenase pytD (Aspergillus terreus (strain NIH 2624 / FGSC A1156)).